The primary structure comprises 291 residues: Geranyl diphosphate 2-C-methyltransferase (291 aa).

It belongs to the geranyl diphosphate 2-C-methyltransferase family. The cofactor is Mg(2+).

It carries out the reaction (2E)-geranyl diphosphate + S-adenosyl-L-methionine = (E)-2-methylgeranyl diphosphate + S-adenosyl-L-homocysteine + H(+). Catalyzes the SAM-dependent methylation of geranyl diphosphate (GPP) to yield (E)-2-methylgeranyl diphosphate (2-MeGPP). This Streptomyces ambofaciens (strain ATCC 23877 / 3486 / DSM 40053 / JCM 4204 / NBRC 12836 / NRRL B-2516) protein is Geranyl diphosphate 2-C-methyltransferase.